The chain runs to 100 residues: Large ribosomal subunit protein uL23 (100 aa).

Belongs to the universal ribosomal protein uL23 family. Part of the 50S ribosomal subunit. Contacts protein L29, and trigger factor when it is bound to the ribosome.

In terms of biological role, one of the early assembly proteins it binds 23S rRNA. One of the proteins that surrounds the polypeptide exit tunnel on the outside of the ribosome. Forms the main docking site for trigger factor binding to the ribosome. In Vibrio vulnificus (strain CMCP6), this protein is Large ribosomal subunit protein uL23.